A 326-amino-acid chain; its full sequence is Meso-diaminopimelate D-dehydrogenase (326 aa).

NADP(+) is bound by residues 11 to 14 (YGNL), 35 to 37 (TRR), 69 to 72 (CGGS), 92 to 94 (SFD), and 121 to 125 (VGWDP). Residues D94, D124, W148, 154–155 (QG), T173, R199, H249, and N276 each bind substrate.

This sequence belongs to the diaminopimelate dehydrogenase family. As to quaternary structure, homodimer.

It carries out the reaction meso-2,6-diaminopimelate + NADP(+) + H2O = (S)-2-amino-6-oxoheptanedioate + NH4(+) + NADPH + H(+). It participates in amino-acid biosynthesis; L-lysine biosynthesis via DAP pathway; DL-2,6-diaminopimelate from (S)-tetrahydrodipicolinate: step 1/1. L,L-2,6-diaminopimelate, D,D-2,6-diaminopimelate and meso-2,5-diaminoadipate competitively inhibit the oxidation of meso-2,6-diaminopimelate. L-2-amino-6-methylene-pimelate is also a potent competitive inhibitor (5 uM) of this reaction. Glyoxylate inhibits the reductive amination of L-2-amino-6-oxopimelate about 30%. The enzyme is inhibited completely by p-chloromercuribenzoate and HgCl(2) in vitro. In terms of biological role, catalyzes the reversible NADPH-dependent reductive amination of L-2-amino-6-oxopimelate, the acyclic form of L-tetrahydrodipicolinate, to generate the meso compound, D,L-2,6-diaminopimelate. Probably plays a role in lysine biosynthesis. Exhibits a high substrate specificity, since alpha-ketoglutarate, pyruvate, oxaloacetate, glyoxylate, alpha-ketobutyrate, alpha-ketovalerate, alpha-ketocaproate, alpha-ketoisocaproate, alpha-ketoisovalerate, and phenylpyruvate are not substrates for the reductive amination reaction, and L,L-2,6-diaminopimelate, D,D-2,6-diaminopimelate, DL-alpha-aminopimelate, meso- and DL-2,5-diaminoadipate, L-djenkolate, L-cystine, L-lysine, S-(beta-aminoethy1)-L-homocysteine, L-ornithine, L-arginine, L-alpha,gamma-diaminobutyrate, L-histidine, L-phenylalanine, L-tyrosine, L-glutamate, L-aspartate, L-leucine, L-valine, L-methionine, L-serine, L-alanine, L-alpha-aminobutyrate, D-lysine, D-glutamate, D-leucine, D-alanine, D-phenylalanine, epsilon-aminocaproate, 7-aminoheptanoate, and 8-aminooctanoate are not substrates for the oxidative deamination reaction. Cannot use NAD(+) or NAD(+) analogs instead of NADP(+) for the oxidative deamination reaction. This Lysinibacillus sphaericus (Bacillus sphaericus) protein is Meso-diaminopimelate D-dehydrogenase (dapdh).